Reading from the N-terminus, the 297-residue chain is Ribosomal RNA small subunit methyltransferase A (297 aa).

Positions 31, 33, 58, 79, 104, and 129 each coordinate S-adenosyl-L-methionine.

The protein belongs to the class I-like SAM-binding methyltransferase superfamily. rRNA adenine N(6)-methyltransferase family. RsmA subfamily.

Its subcellular location is the cytoplasm. It carries out the reaction adenosine(1518)/adenosine(1519) in 16S rRNA + 4 S-adenosyl-L-methionine = N(6)-dimethyladenosine(1518)/N(6)-dimethyladenosine(1519) in 16S rRNA + 4 S-adenosyl-L-homocysteine + 4 H(+). In terms of biological role, specifically dimethylates two adjacent adenosines (A1518 and A1519) in the loop of a conserved hairpin near the 3'-end of 16S rRNA in the 30S particle. May play a critical role in biogenesis of 30S subunits. The chain is Ribosomal RNA small subunit methyltransferase A from Staphylococcus aureus (strain Mu3 / ATCC 700698).